The chain runs to 218 residues: Oxidative stress regulator AosR (218 aa).

The CXXXC motif lies at 5–9; sequence CGRRC. The cysteines at positions 5 and 9 are disulfide-linked.

This sequence belongs to the AosR family. Homodimer. Under oxidative stress, interacts with the extracytoplasmic-function (ECF) RNA polymerase sigma factor SigH.

Activity is modulated by the formation of a disulfide bound within the N-terminal Cys-X-X-X-Cys (CXXXC) motif. This intramolecular disulfide bond is formed in response to oxidative stress, and results in oxidative stress-dependent interaction with the sigma factor SigH. In terms of biological role, transcription factor crucial for intra-mycobacterial redox homeostasis and protection against host-derived oxidative and nitrosative radicals. In response to oxidative stress, interacts with the ECF sigma factor SigH and, in conjunction with SigH, binds to an auxiliary promoter upstream of mec-cysO-cysM, leading to the transcriptional activation of these genes encoding a non-canonical actinomycete-specific cysteine biosynthesis pathway. Increased transcription of mec-cysO-cysM results in enhanced production of L-cysteine and cysteine-derived antioxidant molecules. Increased production of cysteine protects mycobacteria cells from host phagocyte-derived oxidative and nitrosative stress, thus facilitating the mycobacterial growth in the host. This chain is Oxidative stress regulator AosR, found in Mycobacterium bovis (strain ATCC BAA-935 / AF2122/97).